The sequence spans 368 residues: Phospho-N-acetylmuramoyl-pentapeptide-transferase (368 aa).

The next 9 membrane-spanning stretches (helical) occupy residues 30-50 (AAAI…IRFL), 72-92 (VPTM…LLWA), 98-118 (HVWL…IDDY), 139-159 (VALG…SVLL), 170-190 (FSVD…TAVS), 201-221 (GLAA…AYLG), 238-258 (AGEI…FLWF), 262-284 (PAEV…VIAL), and 345-365 (KIVI…LMTL).

This sequence belongs to the glycosyltransferase 4 family. MraY subfamily. Requires Mg(2+) as cofactor.

The protein localises to the cell inner membrane. The catalysed reaction is UDP-N-acetyl-alpha-D-muramoyl-L-alanyl-gamma-D-glutamyl-meso-2,6-diaminopimeloyl-D-alanyl-D-alanine + di-trans,octa-cis-undecaprenyl phosphate = di-trans,octa-cis-undecaprenyl diphospho-N-acetyl-alpha-D-muramoyl-L-alanyl-D-glutamyl-meso-2,6-diaminopimeloyl-D-alanyl-D-alanine + UMP. It participates in cell wall biogenesis; peptidoglycan biosynthesis. Functionally, catalyzes the initial step of the lipid cycle reactions in the biosynthesis of the cell wall peptidoglycan: transfers peptidoglycan precursor phospho-MurNAc-pentapeptide from UDP-MurNAc-pentapeptide onto the lipid carrier undecaprenyl phosphate, yielding undecaprenyl-pyrophosphoryl-MurNAc-pentapeptide, known as lipid I. The sequence is that of Phospho-N-acetylmuramoyl-pentapeptide-transferase from Chlorobaculum parvum (strain DSM 263 / NCIMB 8327) (Chlorobium vibrioforme subsp. thiosulfatophilum).